We begin with the raw amino-acid sequence, 185 residues long: Ribosome-recycling factor (185 aa).

Positions 137–158 (NQVKKLEKDKEISEDESKKAQE) are disordered. The segment covering 140 to 158 (KKLEKDKEISEDESKKAQE) has biased composition (basic and acidic residues).

Belongs to the RRF family.

Its subcellular location is the cytoplasm. Responsible for the release of ribosomes from messenger RNA at the termination of protein biosynthesis. May increase the efficiency of translation by recycling ribosomes from one round of translation to another. This Helicobacter pylori (strain P12) protein is Ribosome-recycling factor.